We begin with the raw amino-acid sequence, 716 residues long: Leucine-rich repeat neuronal protein 1 (716 aa).

A signal peptide spans 1–25; sequence MARMSFVLAAYQMVLSLLMTSLTGS. Positions 26-72 constitute an LRRNT domain; it reads SLQSSECPQLCVCEIRPWFTPQSTYREATTVDCNDLRLTRIPSNLSS. Topologically, residues 26 to 631 are extracellular; that stretch reads SLQSSECPQL…DISDQETSTA (606 aa). N-linked (GlcNAc...) asparagine glycosylation occurs at Asn-69. 9 LRR repeats span residues 73 to 95, 96 to 117, 120 to 141, 144 to 165, 168 to 189, 192 to 213, 216 to 237, 240 to 261, and 264 to 285; these read DTQV…QQLF, NLTE…GLAN, QLTT…CLQD, NLQE…AFSG, NLLR…WFDS, NLEI…NFKP, NLRS…ALVG, SLES…ALQK, and NLKF…DFKN. Asn-96, Asn-106, and Asn-117 each carry an N-linked (GlcNAc...) asparagine glycan. Residues 371-424 enclose the LRRCT domain; that stretch reads NPLRCDCVIHWINSNKTNIRFMEPLSMFCAMPPEYRGQQVKEVLIQDSSEQCLP. N-linked (GlcNAc...) asparagine glycosylation occurs at Asn-385. The Ig-like C2-type domain maps to 424 to 515; it reads PMISHDTFPN…GADTRVVMIK (92 aa). Cys-447 and Cys-499 are joined by a disulfide. Residues Asn-517, Asn-582, and Asn-611 are each glycosylated (N-linked (GlcNAc...) asparagine). The Fibronectin type-III domain maps to 525 to 617; that stretch reads QVLKIYVKQT…SCVNVTTKNA (93 aa). The helical transmembrane segment at 632-652 threads the bilayer; that stretch reads LAAVMGSMFAVISLASIAVYI. The Cytoplasmic segment spans residues 653-716; the sequence is AKRFKRKNYH…VDTSRSYYMW (64 aa). The segment covering 691–700 has biased composition (basic and acidic residues); sequence DSEKDKDGTA. The interval 691-716 is disordered; that stretch reads DSEKDKDGTADTKPTQVDTSRSYYMW. The span at 702-716 shows a compositional bias: polar residues; the sequence is TKPTQVDTSRSYYMW.

It is found in the membrane. The chain is Leucine-rich repeat neuronal protein 1 (LRRN1) from Bos taurus (Bovine).